Reading from the N-terminus, the 377-residue chain is Glutamate 5-kinase (377 aa).

Residue lysine 20 participates in ATP binding. Substrate contacts are provided by serine 60, aspartate 147, and asparagine 159. 179–180 (TD) lines the ATP pocket. Positions 285–363 (AGRLVIDAGA…DKVHQVLGEA (79 aa)) constitute a PUA domain.

The protein belongs to the glutamate 5-kinase family.

The protein localises to the cytoplasm. It carries out the reaction L-glutamate + ATP = L-glutamyl 5-phosphate + ADP. Its pathway is amino-acid biosynthesis; L-proline biosynthesis; L-glutamate 5-semialdehyde from L-glutamate: step 1/2. Its function is as follows. Catalyzes the transfer of a phosphate group to glutamate to form L-glutamate 5-phosphate. In Acinetobacter baylyi (strain ATCC 33305 / BD413 / ADP1), this protein is Glutamate 5-kinase.